Reading from the N-terminus, the 358-residue chain is Dynein axonemal assembly factor 10 (358 aa).

6 WD repeats span residues 64–106 (EKPK…TPVY), 116–155 (NCID…TPVA), 163–206 (ETKR…VRWE), 208–250 (NIKN…PSKG), 258–298 (AHKS…QRSR), and 320–358 (LSTQ…LNKL).

In terms of assembly, interacts with PIH1D1; the interaction associates DNAAF10 with the R2TP complex. Interacts with several dynein axonemal assembly factors.

Its subcellular location is the dynein axonemal particle. In terms of biological role, key assembly factor specifically required for the stability of axonemal dynein heavy chains in cytoplasm. The chain is Dynein axonemal assembly factor 10 (dnaaf10) from Xenopus tropicalis (Western clawed frog).